The following is a 701-amino-acid chain: Sulfate anion transporter 1 (701 aa).

Positions 1–20 (MDESPEPLQQGRGPVPVRRQ) are disordered. A run of 2 helical transmembrane segments spans residues 68-90 (YLAG…AIAY) and 94-116 (AGLQ…FLMG). Residues asparagine 158 and asparagine 163 are each glycosylated (N-linked (GlcNAc...) asparagine). Helical transmembrane passes span 176-198 (YAIR…MGVL), 255-277 (GAGQ…LLAA), 290-309 (VPLP…SHFG), 342-364 (ALDA…EMFA), 377-399 (LLAV…SAAL), 412-434 (TQLS…APLF), and 472-494 (LVWA…LAGV). The 161-residue stretch at 527-687 (EFEGLVPEPG…LSVHDAVQTA (161 aa)) folds into the STAS domain.

The protein belongs to the SLC26A/SulP transporter (TC 2.A.53) family. Expressed most abundantly in the kidney and liver, with lower levels in the pancreas, testis, brain, small intestine, colon, and lung.

The protein resides in the cell membrane. It localises to the basolateral cell membrane. The enzyme catalyses thiosulfate(in) + sulfate(out) = thiosulfate(out) + sulfate(in). The catalysed reaction is 2 hydrogencarbonate(out) + sulfate(in) = 2 hydrogencarbonate(in) + sulfate(out). It catalyses the reaction oxalate(in) + sulfate(out) = oxalate(out) + sulfate(in). It carries out the reaction oxalate(in) + 2 hydrogencarbonate(out) = oxalate(out) + 2 hydrogencarbonate(in). In terms of biological role, sodium-independent sulfate anion transporter. Can transport other anions including bicarbonate, thiosulfate and oxalate by mediating sulfate-thiosulfate, sulfate-hydrogencarbonate and sulfate-oxalate anion exchange. Mediates oxalate-hydrogencarbonate anion exchange. In Homo sapiens (Human), this protein is Sulfate anion transporter 1 (SLC26A1).